We begin with the raw amino-acid sequence, 474 residues long: Semenogelin-2 (474 aa).

The signal sequence occupies residues 1 to 23 (MKSIILFVLSLLLILEKQAAVMG). 5 disordered regions span residues 24–62 (QKGG…SKGS), 132–158 (GGQA…LSSQ), 173–194 (KEQA…QSSY), 226–247 (VREE…DRLQ), and 272–474 (NLNQ…SSTE). Composition is skewed to polar residues over residues 31–40 (QLPSGSSQFP), 137–158 (RGTQ…LSSQ), and 174–194 (EQAS…QSSY). Residues 292-310 (RTEERQLNHGEKSVQKDVS) are compositionally biased toward basic and acidic residues. Polar residues predominate over residues 325–334 (KSQNQVTIHS). The span at 335–346 (QDQEHGHKENKM) shows a compositional bias: basic and acidic residues. Polar residues predominate over residues 372–397 (GSISIQTEEQIHGKSQNQVRIPSQAQ). Basic and acidic residues predominate over residues 399-426 (YGHKENKISYRSSSTEERRLNSGEKDVQ). Polar residues predominate over residues 445–455 (KSQNQVTIPSQ). Over residues 456-465 (DQEHGHKENK) the composition is skewed to basic and acidic residues.

Belongs to the semenogelin family. In terms of assembly, interacts with SERPINA5.

The protein localises to the secreted. Functionally, participates in the formation of a gel matrix (sperm coagulum) entrapping the accessory gland secretions and ejaculated spermatozoa. The sequence is that of Semenogelin-2 (SEMG2) from Gorilla gorilla gorilla (Western lowland gorilla).